The sequence spans 352 residues: Protein RecA (352 aa).

ATP is bound at residue 67 to 74 (GPESSGKT).

Belongs to the RecA family.

It is found in the cytoplasm. Can catalyze the hydrolysis of ATP in the presence of single-stranded DNA, the ATP-dependent uptake of single-stranded DNA by duplex DNA, and the ATP-dependent hybridization of homologous single-stranded DNAs. It interacts with LexA causing its activation and leading to its autocatalytic cleavage. This Chlamydia trachomatis serovar L2 (strain ATCC VR-902B / DSM 19102 / 434/Bu) protein is Protein RecA.